A 230-amino-acid chain; its full sequence is Prolactin-6A1 (230 aa).

Residues 1-29 (MLSLSQPCFSGTLLMLLASNFLLWKNVAP) form the signal peptide. A glycan (N-linked (GlcNAc...) asparagine) is linked at Asn57. 2 disulfides stabilise this stretch: Cys89–Cys205 and Cys222–Cys230.

The protein belongs to the somatotropin/prolactin family. As to expression, expressed in both placenta and decidual tissues. Detected first in deciduals cells early in gestation and in trophoblasts later in pregnancy.

Its subcellular location is the secreted. This chain is Prolactin-6A1 (Prl6a1), found in Mus musculus (Mouse).